Reading from the N-terminus, the 60-residue chain is Large ribosomal subunit protein uL30 (60 aa).

This sequence belongs to the universal ribosomal protein uL30 family. In terms of assembly, part of the 50S ribosomal subunit.

This is Large ribosomal subunit protein uL30 from Ligilactobacillus salivarius (strain UCC118) (Lactobacillus salivarius).